Reading from the N-terminus, the 503-residue chain is uncharacterized protein (503 aa).

Belongs to the Mg-chelatase subunits D/I family. ComM subfamily.

This is an uncharacterized protein from Mycobacterium tuberculosis (strain CDC 1551 / Oshkosh).